The primary structure comprises 598 residues: MTEGTQVFLLPISTSDSTKEPLSTVTSQAQDSSLSANRPVTEKQQEEAEWESISRLLVTRGFKPLCLVKGANLRDFIVFDKQSSQRMRQAFKTLMEETTRQQSMLQELIETNHQLKSELQLEQNRAAHQEQRANDLQQIMDSVKSKIGELEDESLNRVCQEQNRIKDLQKEYKTLQMKCQHYKKKQMEQEETIASLQKEIRRFAKEEEDRVITQKRLFTHLCRRVPHSVLDKQQCGEDDSQSEGKDYLNLGVSPTYKGLLTSLQKQLEKSNSKIDVLLGEKLNLQKDLENRPTEHELRLYKQQVKKLEKTLKKNIKLQDLIGQKKSDDMEKKDEPSKDIHQQALVDQRYFQVLCSIDSIVHSPRAPGVIYKQSKERAQNRSKDAVQECGFEHLVPVIEMWADELTSLKDLYKSLKILSAELIPWHNLKKPNENEGVKVGDLLLMVDTMLEEVENQKETSSMPNSQTLQAIVSHFQKLFDVQSLNGVYPRMNEVYARLGEMNNAVRNLQELLGLDSSSSLCMVVSTVGKLCKMINEDVSEQIKRVLGPEDLQSIINKLEEHEEFFPAFQAFTNDLLEILEIDDLDAIVPAVKKLKVLSY.

Polar residues predominate over residues 16 to 38 (DSTKEPLSTVTSQAQDSSLSANR). The tract at residues 16–43 (DSTKEPLSTVTSQAQDSSLSANRPVTEK) is disordered. Coiled-coil stretches lie at residues 99 to 210 (TRQQ…EEDR) and 255 to 317 (TYKG…NIKL). The TPR repeat unit spans residues 484-517 (NGVYPRMNEVYARLGEMNNAVRNLQELLGLDSSS).

As to quaternary structure, directly interacts with tubulin-gamma; this interaction determines centrosomal localization.

Its subcellular location is the cytoplasm. It localises to the cytoskeleton. It is found in the microtubule organizing center. The protein resides in the centrosome. Its function is as follows. Plays a role in the organization of both preexisting and nascent microtubules in interphase cells. During mitosis, required for the organization and orientation of the mitotic spindle. This Rattus norvegicus (Rat) protein is Centrosomal protein of 70 kDa (Cep70).